Here is a 1543-residue protein sequence, read N- to C-terminus: ABC multidrug transporter AFR1 (1543 aa).

The tract at residues 1–85 (MSAAGVPAEL…DGKQKRLPAD (85 aa)) is disordered. The segment covering 18–41 (TATTQNPSGLANSQVTSGPVSSAT) has biased composition (polar residues). Residues 62–83 (AVEAEKAEAIDAAGDGKQKRLP) show a composition bias toward basic and acidic residues. Asparagine 117 carries N-linked (GlcNAc...) asparagine glycosylation. Residues 119–157 (SQRSQHELHRPTTRHSVRSSFSRKDRVVSRLTQDDAEKA) are disordered. The segment covering 140-157 (SRKDRVVSRLTQDDAEKA) has biased composition (basic and acidic residues). N-linked (GlcNAc...) asparagine glycosylation is found at asparagine 208 and asparagine 398. Residues 222–474 (IKVLGIFGFN…MIGLGYRDLP (253 aa)) form the ABC transporter 1 domain. The next 5 helical transmembrane spans lie at 585-605 (FGIS…GSVY), 619-639 (GGLL…ELPS), 670-690 (VPYN…MGGL), 695-715 (GAFF…SAFF), and 727-747 (VAAR…GYMI). Asparagine 823 carries an N-linked (GlcNAc...) asparagine glycan. A helical transmembrane segment spans residues 845–865 (FGILLGFFTFFMFLQMLFIEV). The ABC transporter 2 domain maps to 918–1160 (FTWEGLSYTV…VLIDYLERNG (243 aa)). ATP is bound at residue 954–961 (GASGAGKT). Asparagine 1223 carries N-linked (GlcNAc...) asparagine glycosylation. 6 consecutive transmembrane segments (helical) span residues 1254–1274 (WTRL…FLQL), 1285–1305 (VFAI…IEPQ), 1336–1356 (MPYS…GVGF), 1366–1386 (FFLM…AVAA), 1391–1411 (ILIA…FCGV), and 1517–1537 (FGIF…AARF).

It belongs to the ABC transporter superfamily. ABCG family. PDR (TC 3.A.1.205) subfamily.

The protein localises to the cell membrane. It catalyses the reaction itraconazole(in) + ATP + H2O = itraconazole(out) + ADP + phosphate + H(+). The enzyme catalyses voriconazole(in) + ATP + H2O = voriconazole(out) + ADP + phosphate + H(+). The catalysed reaction is fluconazole(in) + ATP + H2O = fluconazole(out) + ADP + phosphate + H(+). Its function is as follows. Major pleiotropic ABC efflux transporter that confers resistance to structurally and functionally unrelated compounds including azoles such as fluconazole (FLC), itraconazole (ITC), posaconazole (POS), and voriconazole (VRC). Is also able to efflux the eukaryote protein synthesis inhibitor cycloheximide (CHX). This chain is ABC multidrug transporter AFR1, found in Cryptococcus neoformans var. grubii serotype A (strain H99 / ATCC 208821 / CBS 10515 / FGSC 9487) (Filobasidiella neoformans var. grubii).